A 364-amino-acid polypeptide reads, in one-letter code: DNA polymerase IV (364 aa).

One can recognise a UmuC domain in the interval 14–198 (IIHIDMDAFF…LPIEKFHGVG (185 aa)). Mg(2+) contacts are provided by D18 and D116. The active site involves E117.

It belongs to the DNA polymerase type-Y family. Monomer. It depends on Mg(2+) as a cofactor.

The protein resides in the cytoplasm. It catalyses the reaction DNA(n) + a 2'-deoxyribonucleoside 5'-triphosphate = DNA(n+1) + diphosphate. Its function is as follows. Poorly processive, error-prone DNA polymerase involved in untargeted mutagenesis. Copies undamaged DNA at stalled replication forks, which arise in vivo from mismatched or misaligned primer ends. These misaligned primers can be extended by PolIV. Exhibits no 3'-5' exonuclease (proofreading) activity. May be involved in translesional synthesis, in conjunction with the beta clamp from PolIII. In Streptococcus pyogenes serotype M2 (strain MGAS10270), this protein is DNA polymerase IV.